We begin with the raw amino-acid sequence, 510 residues long: GMP synthase [glutamine-hydrolyzing] (510 aa).

The 191-residue stretch at leucine 5–aspartate 195 folds into the Glutamine amidotransferase type-1 domain. Residue cysteine 82 is the Nucleophile of the active site. Active-site residues include histidine 169 and glutamate 171. The GMPS ATP-PPase domain occupies tryptophan 196–arginine 385. Serine 223–serine 229 serves as a coordination point for ATP.

Homodimer.

The enzyme catalyses XMP + L-glutamine + ATP + H2O = GMP + L-glutamate + AMP + diphosphate + 2 H(+). Its pathway is purine metabolism; GMP biosynthesis; GMP from XMP (L-Gln route): step 1/1. Functionally, catalyzes the synthesis of GMP from XMP. This is GMP synthase [glutamine-hydrolyzing] from Clostridium kluyveri (strain NBRC 12016).